A 136-amino-acid chain; its full sequence is Large ribosomal subunit protein bL17 (136 aa).

This sequence belongs to the bacterial ribosomal protein bL17 family. As to quaternary structure, part of the 50S ribosomal subunit. Contacts protein L32.

The sequence is that of Large ribosomal subunit protein bL17 from Akkermansia muciniphila (strain ATCC BAA-835 / DSM 22959 / JCM 33894 / BCRC 81048 / CCUG 64013 / CIP 107961 / Muc).